The sequence spans 346 residues: MDFLTKHLDCLSNWQLNLQPGWQTVGASALLAAGSLFVVSRALVFVRVLLSLFVLPGKPLRSFGPKGSWAVVTGASDGLGKEFALQLARADFNILLVSRTASKLDTLSNEITTKFPSVQTKTLAMDFARNQDSDYEKLKELVDELDVSVLVNNVGKSHSIPTPFALTPEDEMTDIVTINCLGTLRATQLVVPGMMQRKRGLVLTMGSFGGLLPTPLLATYSGSKAFLQQWSTSLGSELEPYGITVELVQAYLITSAMSKIRRTSATIPDPRSFVKSVLTKIGRNGGSPTYAYSSSPYWSHGLMAWFLTCVTGTMGKIVVSQNKGMHESIRKRALRKAEREKGKKST.

Residues Gly-26–Val-46 traverse the membrane as a helical segment. Positions 71, 126, 134, 153, 220, 224, 253, and 255 each coordinate NADP(+). The Proton donor role is filled by Tyr-220. Catalysis depends on Lys-224, which acts as the Lowers pKa of active site Tyr.

This sequence belongs to the short-chain dehydrogenases/reductases (SDR) family.

It localises to the endoplasmic reticulum membrane. It carries out the reaction a very-long-chain (3R)-3-hydroxyacyl-CoA + NADP(+) = a very-long-chain 3-oxoacyl-CoA + NADPH + H(+). Its pathway is lipid metabolism; fatty acid biosynthesis. Component of the microsomal membrane bound fatty acid elongation system, which produces the 26-carbon very long-chain fatty acids (VLCFA) from palmitate. Catalyzes the reduction of the 3-ketoacyl-CoA intermediate that is formed in each cycle of fatty acid elongation. VLCFAs serve as precursors for ceramide and sphingolipids. The chain is Very-long-chain 3-oxoacyl-CoA reductase from Aspergillus niger (strain ATCC MYA-4892 / CBS 513.88 / FGSC A1513).